The following is a 262-amino-acid chain: Diphthine synthase (262 aa).

S-adenosyl-L-methionine contacts are provided by residues Leu10, Asp87, Val90, 115-116, Leu166, Ala209, and His234; that span reads SI.

It belongs to the diphthine synthase family. Homodimer.

The catalysed reaction is 2-[(3S)-amino-3-carboxypropyl]-L-histidyl-[translation elongation factor 2] + 3 S-adenosyl-L-methionine = diphthine-[translation elongation factor 2] + 3 S-adenosyl-L-homocysteine + 3 H(+). It participates in protein modification; peptidyl-diphthamide biosynthesis. Functionally, S-adenosyl-L-methionine-dependent methyltransferase that catalyzes the trimethylation of the amino group of the modified target histidine residue in translation elongation factor 2 (EF-2), to form an intermediate called diphthine. The three successive methylation reactions represent the second step of diphthamide biosynthesis. The protein is Diphthine synthase of Pyrococcus abyssi (strain GE5 / Orsay).